The following is a 26-amino-acid chain: Toxin TdII-1 (26 aa).

Belongs to the long (4 C-C) scorpion toxin superfamily. Sodium channel inhibitor family. Beta subfamily. As to expression, expressed by the venom gland.

The protein resides in the secreted. Functionally, beta toxins bind voltage-independently at site-4 of sodium channels (Nav) and shift the voltage of activation toward more negative potentials thereby affecting sodium channel activation and promoting spontaneous and repetitive firing. This toxin is active against mammals and crustaceans. This chain is Toxin TdII-1, found in Tityus discrepans (Venezuelan scorpion).